A 514-amino-acid chain; its full sequence is MCQAGEDYAGPARREPPPVPRPSREQKCVKCAEGLPVVVIRAGDAFCRVCFKAFYVHKFRAMLGKNRVIFPGEKVLLSWSGGPSSSSMVWQVLEGLSQDSAKRLRFVPGVIYVDEGAACGQSLEDRQKTVAEVKRILENTGFPWHVVALEEVFSLPPSVLCCTSQESAGTEEAYKAAVDRFLQQQQQQQQRVLGAEAGASPAQGEARLHPSHGREPSGTAGYPTAAQTEALSRLFSSIKTLTAKEELLQTLRTHLIVHIARVHGYCKVMTGETCTRLAIKLMTNLALGRGAFLAWDTGFSDERHGDVVLVRPMRDHTLKEVAFYNHLFRVPSVFTPAIDTKAPEKASIHRLMEAFILRLQTLFPSTVSTVYRTSEKLVKAPREGCAAGPSGPSCLLCMCALDIDTADSATAFGAQSSSHLSQMPSAEAGMPTQPCCAAGEGQAQSCHREVGKRGDARACITEQLCYSCRVNMKDLPSLDPLPPYVLAEAQLRSQRGSVSEEIQEYLITDEEEDS.

Disordered stretches follow at residues 1 to 23 and 192 to 222; these read MCQA…PRPS and VLGA…TAGY. Cys2 bears the N-acetylcysteine mark. 2 stretches are compositionally biased toward basic and acidic residues: residues 12 to 23 and 206 to 215; these read ARREPPPVPRPS and ARLHPSHGRE. Residues Ser421 and Ser425 each carry the phosphoserine modification.

This sequence belongs to the CTU2/NCS2 family. Component of a complex at least composed of URM1, CTU2/NCS2 and CTU1/ATPBD3.

Its subcellular location is the cytoplasm. It functions in the pathway tRNA modification; 5-methoxycarbonylmethyl-2-thiouridine-tRNA biosynthesis. Functionally, plays a central role in 2-thiolation of mcm(5)S(2)U at tRNA wobble positions of tRNA(Lys), tRNA(Glu) and tRNA(Gln). May act by forming a heterodimer with CTU1/ATPBD3 that ligates sulfur from thiocarboxylated URM1 onto the uridine of tRNAs at wobble position. The sequence is that of Cytoplasmic tRNA 2-thiolation protein 2 (Ctu2) from Mus musculus (Mouse).